Consider the following 476-residue polypeptide: 23S rRNA (uracil(1939)-C(5))-methyltransferase RlmD (476 aa).

The TRAM domain maps to 1–55 (MVDEVLKIESLDLEARGIARRDGKVVFVEGALPGERVYAATVRRKPSYEIARVET). Residues C68, C74, C77, and C156 each contribute to the [4Fe-4S] cluster site. S-adenosyl-L-methionine is bound by residues Q265, F294, N299, E315, N343, and D364. Residue C394 is the Nucleophile of the active site.

The protein belongs to the class I-like SAM-binding methyltransferase superfamily. RNA M5U methyltransferase family. RlmD subfamily.

It catalyses the reaction uridine(1939) in 23S rRNA + S-adenosyl-L-methionine = 5-methyluridine(1939) in 23S rRNA + S-adenosyl-L-homocysteine + H(+). In terms of biological role, catalyzes the formation of 5-methyl-uridine at position 1939 (m5U1939) in 23S rRNA. This Bordetella avium (strain 197N) protein is 23S rRNA (uracil(1939)-C(5))-methyltransferase RlmD.